The chain runs to 389 residues: S-adenosylmethionine synthase (389 aa).

Position 16 (H16) interacts with ATP. D18 contacts Mg(2+). E44 contributes to the K(+) binding site. L-methionine is bound by residues E57 and Q100. The interval 100 to 110 (QSPDIAQGVDE) is flexible loop. ATP is bound by residues 167 to 169 (DAK), 233 to 234 (RF), D242, 248 to 249 (RK), A265, and K269. D242 contributes to the L-methionine binding site. K273 provides a ligand contact to L-methionine.

Belongs to the AdoMet synthase family. As to quaternary structure, homotetramer; dimer of dimers. Mg(2+) serves as cofactor. It depends on K(+) as a cofactor.

The protein localises to the cytoplasm. It catalyses the reaction L-methionine + ATP + H2O = S-adenosyl-L-methionine + phosphate + diphosphate. The protein operates within amino-acid biosynthesis; S-adenosyl-L-methionine biosynthesis; S-adenosyl-L-methionine from L-methionine: step 1/1. Its function is as follows. Catalyzes the formation of S-adenosylmethionine (AdoMet) from methionine and ATP. The overall synthetic reaction is composed of two sequential steps, AdoMet formation and the subsequent tripolyphosphate hydrolysis which occurs prior to release of AdoMet from the enzyme. The protein is S-adenosylmethionine synthase of Acidithiobacillus ferrooxidans (strain ATCC 23270 / DSM 14882 / CIP 104768 / NCIMB 8455) (Ferrobacillus ferrooxidans (strain ATCC 23270)).